Reading from the N-terminus, the 144-residue chain is Large ribosomal subunit protein uL11 (144 aa).

Belongs to the universal ribosomal protein uL11 family. Part of the ribosomal stalk of the 50S ribosomal subunit. Interacts with L10 and the large rRNA to form the base of the stalk. L10 forms an elongated spine to which L12 dimers bind in a sequential fashion forming a multimeric L10(L12)X complex. Post-translationally, one or more lysine residues are methylated.

Functionally, forms part of the ribosomal stalk which helps the ribosome interact with GTP-bound translation factors. This Streptomyces coelicolor (strain ATCC BAA-471 / A3(2) / M145) protein is Large ribosomal subunit protein uL11.